Reading from the N-terminus, the 644-residue chain is Transcription factor btd (644 aa).

Disordered stretches follow at residues 16 to 65 (HQAQ…TQQQ) and 101 to 196 (APPS…AGSP). 2 stretches are compositionally biased toward low complexity: residues 101-119 (APPS…SSPL) and 140-196 (ASPN…AGSP). 3 consecutive C2H2-type zinc fingers follow at residues 333–357 (HICH…LRWH), 363–385 (FLCL…GRTH), and 391–413 (YACP…KKTH). Disordered regions lie at residues 437–461 (LEKK…QPDT) and 478–537 (TSAG…SSSA). Composition is skewed to low complexity over residues 499–508 (TTTTSSAAAS) and 521–537 (AIQP…SSSA).

The protein localises to the nucleus. Required for the development of the antennal, intercalary and mandibular segments of the head. This Drosophila melanogaster (Fruit fly) protein is Transcription factor btd (btd).